A 388-amino-acid polypeptide reads, in one-letter code: MKIHEYQAKQLFQKYGVPIPRGKAAFTVEEAKAVGAELGTFPVVVKAQIHAGGRGKGGGVKLAKSAAEVDQYAKGILGMTLVTHQTGPEGRLVKKLLVEEGLPIEKELYLSVLPDRGTSKIVFMASEAGGMDIEEVAAKTPEKIIKVFIDPLLGFKGFHANELAYGLNLKPELIKQFNAMVAALYKLCTDYDCSLVEINPLVLTSDNRVIALDGKINFDDNAMYRHKDIQEYRDLDEEDPFEIEASKFELNYIKMPGGNIGNMVNGAGLAMATMDIIQQAGAAPANFLDVGGGASAEQVENGFRIILADPAVKGVLINIFGGILRCDRLANGVVEAAKKVGIRVPVVIRMEGTNVEQGREILAKSGLNLINAKDVADAAQKIAAVAKG.

The 236-residue stretch at 9–244 (KQLFQKYGVP…LDEEDPFEIE (236 aa)) folds into the ATP-grasp domain. Residues K46, 53 to 55 (GRG), E99, L102, and E107 contribute to the ATP site. Residues N199 and D213 each coordinate Mg(2+). Residues N265 and 322 to 324 (GIL) contribute to the substrate site.

This sequence belongs to the succinate/malate CoA ligase beta subunit family. As to quaternary structure, heterotetramer of two alpha and two beta subunits. Mg(2+) serves as cofactor.

The enzyme catalyses succinate + ATP + CoA = succinyl-CoA + ADP + phosphate. It carries out the reaction GTP + succinate + CoA = succinyl-CoA + GDP + phosphate. Its pathway is carbohydrate metabolism; tricarboxylic acid cycle; succinate from succinyl-CoA (ligase route): step 1/1. Functionally, succinyl-CoA synthetase functions in the citric acid cycle (TCA), coupling the hydrolysis of succinyl-CoA to the synthesis of either ATP or GTP and thus represents the only step of substrate-level phosphorylation in the TCA. The beta subunit provides nucleotide specificity of the enzyme and binds the substrate succinate, while the binding sites for coenzyme A and phosphate are found in the alpha subunit. The polypeptide is Succinate--CoA ligase [ADP-forming] subunit beta (Syntrophobacter fumaroxidans (strain DSM 10017 / MPOB)).